Here is a 542-residue protein sequence, read N- to C-terminus: Cytochrome P450 monooxygenase sdnH (542 aa).

A helical membrane pass occupies residues 25-45 (LYVAGGILGAFTVYSIILVVY). Positions 141-160 (IIPPRGLGQEDSIGSTRSHD) are disordered. The chain crosses the membrane as a helical span at residues 340–360 (FMGAGTYPTAATLIFVAYYIL). Heme is bound at residue cysteine 483. Asparagine 506 is a glycosylation site (N-linked (GlcNAc...) asparagine).

It belongs to the cytochrome P450 family. The cofactor is heme.

It is found in the membrane. Its pathway is antibiotic biosynthesis. Functionally, cytochrome P450 monooxygenase; part of the gene cluster that mediates the biosynthesis of sordarin and hypoxysordarin, glycoside antibiotics with a unique tetracyclic diterpene aglycone structure. First, the geranylgeranyl diphosphate synthase sdnC constructs GGDP from farnesyl diphosphate and isopentenyl diphosphate. The diterpene cyclase sdnA then catalyzes the cyclization of GGDP to afford cycloaraneosene. Cycloaraneosene is then hydroxylated four times by the putative cytochrome P450 monooxygenases sdnB, sdnE, sdnF and sdnH to give a hydroxylated cycloaraneosene derivative such as cycloaraneosene-8,9,13,19-tetraol. Although the order of the hydroxylations is unclear, at least C8, C9 and C13 of the cycloaraneosene skeleton are hydroxylated before the sordaricin formation. Dehydration of the 13-hydroxy group of the hydroxylated cycloaraneosene derivative might be catalyzed by an unassigned hypothetical protein such as sdnG and sdnP to construct the cyclopentadiene moiety. The FAD-dependent oxidoreductase sdnN is proposed to catalyze the oxidation at C9 of the hydroxylated cycloaraneosene derivative and also catalyze the Baeyer-Villiger oxidation to give the lactone intermediate. The presumed lactone intermediate would be hydrolyzed to give an acrolein moiety and a carboxylate moiety. Then, [4+2]cycloaddition would occur between the acrolein moiety and the cyclopentadiene moiety to give sordaricin. SdnN might also be involved in the [4+2]cycloaddition after the hypothesized oxidation to accommodate the oxidized product and prompt the [4+2]cycloaddition. GDP-6-deoxy-D-altrose may be biosynthesized from GDP-D-mannose by the putative GDP-mannose-4,6-dehydratase sdnI and the short-chain dehydrogenase sdnK. The glycosyltransferase sdnJ catalyzes the attachment of 6-deoxy-D-altrose onto the 19-hydroxy group of sordaricin to give 4'-O-demethylsordarin. The methyltransferase sdnD would complete the biosynthesis of sordarin. Sordarin can be further modified into hypoxysordarin. The unique acyl chain at the 3'-hydroxy group of hypoxysordarin would be constructed by an iterative type I PKS sdnO and the trans-acting polyketide methyltransferase sdnL. SdnL would be responsible for the introduction of an alpha-methyl group of the polyketide chain. Alternatively, the beta-lactamase-like protein sdnR might be responsible for the cleavage and transfer of the polyketide chain from the PKS sdnO to sordarin. Two putative cytochrome P450 monooxygenases, sdnQ and sdnT, might catalyze the epoxidations of the polyketide chain to complete the biosynthesis of hypoxysordarin. Transcriptional regulators sdnM and sdnS are presumably encoded for the transcriptional regulation of the expression of the sdn gene cluster. The polypeptide is Cytochrome P450 monooxygenase sdnH (Sordaria araneosa (Pleurage araneosa)).